A 171-amino-acid chain; its full sequence is Putative rhomboid protein L523 (171 aa).

4 helical membrane passes run tyrosine 3–phenylalanine 23, phenylalanine 67–threonine 87, valine 94–leucine 114, and glycine 119–serine 139. Serine 100 acts as the Nucleophile in catalysis. Residue histidine 143 is part of the active site. A helical membrane pass occupies residues isoleucine 144–valine 164.

It belongs to the peptidase S54 family.

It is found in the membrane. Its function is as follows. Probable serine protease. The sequence is that of Putative rhomboid protein L523 from Acanthamoeba polyphaga mimivirus (APMV).